The following is a 412-amino-acid chain: Branched-chain alpha-ketoacid dehydrogenase kinase (412 aa).

The transit peptide at 1–30 directs the protein to the mitochondrion; sequence MILASVLGSGPRGGPPLRPLLGPALSLRAR. S31 bears the Phosphoserine mark. At S52 the chain carries Phosphoserine; by autocatalysis. The Histidine kinase domain occupies 159-404; that stretch reads LDDHKDVVTL…DVYLRLRHID (246 aa). An N6-acetyllysine mark is found at K192 and K233. N279 and D315 together coordinate ATP. N279 provides a ligand contact to Mg(2+). K(+) is bound by residues V328, D330, and F333. Residues T334 and T335 each coordinate ATP. Phosphoserine occurs at positions 356 and 360. Residues H364, G367, and L370 each contribute to the ATP site. G367 provides a ligand contact to K(+).

Belongs to the PDK/BCKDK protein kinase family. As to quaternary structure, homodimer. Homotetramer. Dimerizes through interaction of two opposing nucleotide-binding domains. Interacts with E2 component of the branched-chain alpha-ketoacid dehydrogenase (BCKDH) complex. Competes with BCKDK for binding to the E2 component; this interaction is modulated by branched-chain alpha-keto acids. At steady state, BCKDH holoenzyme contains BCKDK and BCKDHA is phosphorylated. In response to high levels of branched-chain alpha-keto acids, the inhibitory BCKDK is replaced by activating PPM1K leading to BCKDHA dephosphorylation and BCAA degradation. Post-translationally, autophosphorylated.

The protein resides in the mitochondrion matrix. The protein localises to the mitochondrion. It catalyses the reaction L-seryl-[3-methyl-2-oxobutanoate dehydrogenase] + ATP = O-phospho-L-seryl-[3-methyl-2-oxobutanoate dehydrogenase] + ADP + H(+). The enzyme catalyses L-seryl-[protein] + ATP = O-phospho-L-seryl-[protein] + ADP + H(+). Functionally, serine/threonine-protein kinase component of macronutrients metabolism. Forms a functional kinase and phosphatase pair with PPM1K, serving as a metabolic regulatory node that coordinates branched-chain amino acids (BCAAs) with glucose and lipid metabolism via two distinct phosphoprotein targets: mitochondrial BCKDHA subunit of the branched-chain alpha-ketoacid dehydrogenase (BCKDH) complex and cytosolic ACLY, a lipogenic enzyme of Krebs cycle. Phosphorylates and inactivates mitochondrial BCKDH complex a multisubunit complex consisting of three multimeric components each involved in different steps of BCAA catabolism: E1 composed of BCKDHA and BCKDHB, E2 core composed of DBT monomers, and E3 composed of DLD monomers. Associates with the E2 component of BCKDH complex and phosphorylates BCKDHA on Ser-347, leading to conformational changes that interrupt substrate channeling between E1 and E2 and inactivates the BCKDH complex. Phosphorylates ACLY on Ser-455 in response to changes in cellular carbohydrate abundance such as occurs during fasting to feeding metabolic transition. Refeeding stimulates MLXIPL/ChREBP transcription factor, leading to increased BCKDK to PPM1K expression ratio, phosphorylation and activation of ACLY that ultimately results in the generation of malonyl-CoA and oxaloacetate immediate substrates of de novo lipogenesis and glucogenesis, respectively. Recognizes phosphosites having SxxE/D canonical motif. This is Branched-chain alpha-ketoacid dehydrogenase kinase (BCKDK) from Bos taurus (Bovine).